We begin with the raw amino-acid sequence, 273 residues long: Formamidopyrimidine-DNA glycosylase (273 aa).

Catalysis depends on Pro-2, which acts as the Schiff-base intermediate with DNA. Glu-3 serves as the catalytic Proton donor. The active-site Proton donor; for beta-elimination activity is Lys-59. DNA is bound by residues His-93, Arg-111, and Arg-154. Residues 239–273 form an FPG-type zinc finger; it reads KVYGRGGEPCKECGHTLVRIRLAGRSTVFCPCCQV. The active-site Proton donor; for delta-elimination activity is the Arg-263.

Belongs to the FPG family. As to quaternary structure, monomer. Requires Zn(2+) as cofactor.

The enzyme catalyses Hydrolysis of DNA containing ring-opened 7-methylguanine residues, releasing 2,6-diamino-4-hydroxy-5-(N-methyl)formamidopyrimidine.. The catalysed reaction is 2'-deoxyribonucleotide-(2'-deoxyribose 5'-phosphate)-2'-deoxyribonucleotide-DNA = a 3'-end 2'-deoxyribonucleotide-(2,3-dehydro-2,3-deoxyribose 5'-phosphate)-DNA + a 5'-end 5'-phospho-2'-deoxyribonucleoside-DNA + H(+). Involved in base excision repair of DNA damaged by oxidation or by mutagenic agents. Acts as a DNA glycosylase that recognizes and removes damaged bases. Has a preference for oxidized purines, such as 7,8-dihydro-8-oxoguanine (8-oxoG). Has AP (apurinic/apyrimidinic) lyase activity and introduces nicks in the DNA strand. Cleaves the DNA backbone by beta-delta elimination to generate a single-strand break at the site of the removed base with both 3'- and 5'-phosphates. The polypeptide is Formamidopyrimidine-DNA glycosylase (Desulfitobacterium hafniense (strain DSM 10664 / DCB-2)).